We begin with the raw amino-acid sequence, 87 residues long: Exendin-4 (87 aa).

A signal peptide spans 1-23 (MKIILWLCVFGLFLATLFPISWQ). Positions 24–45 (MPVESGLSSEDSASSESFASKI) are excised as a propeptide. Position 86 is a serine amide (serine 86).

Belongs to the glucagon family. In terms of tissue distribution, expressed by the venom gland.

The protein resides in the secreted. Functionally, venom protein that mimics the incretin hormone glucagon-like peptide 1 (GLP-1). It stimulates insulin synthesis and secretion, protects against beta-cell apoptosis in response to different insults, and promotes beta-cell proliferation It also promotes satiety, reduces food intake, reduces fat deposition, reduces body weight and inhibits gastric emptying. Interacts with GLP-1 receptor (GLP1R). Induces hypotension that is mediated by relaxation of cardiac smooth muscle. The chain is Exendin-4 from Heloderma suspectum cinctum (Banded Gila monster).